The sequence spans 630 residues: Glutamyl-tRNA(Gln) amidotransferase subunit E (630 aa).

The protein belongs to the GatB/GatE family. GatE subfamily. In terms of assembly, heterodimer of GatD and GatE.

It catalyses the reaction L-glutamyl-tRNA(Gln) + L-glutamine + ATP + H2O = L-glutaminyl-tRNA(Gln) + L-glutamate + ADP + phosphate + H(+). In terms of biological role, allows the formation of correctly charged Gln-tRNA(Gln) through the transamidation of misacylated Glu-tRNA(Gln) in organisms which lack glutaminyl-tRNA synthetase. The reaction takes place in the presence of glutamine and ATP through an activated gamma-phospho-Glu-tRNA(Gln). The GatDE system is specific for glutamate and does not act on aspartate. The sequence is that of Glutamyl-tRNA(Gln) amidotransferase subunit E from Methanocaldococcus jannaschii (strain ATCC 43067 / DSM 2661 / JAL-1 / JCM 10045 / NBRC 100440) (Methanococcus jannaschii).